The following is a 499-amino-acid chain: Glycerol kinase (499 aa).

Threonine 12 lines the ADP pocket. 3 residues coordinate ATP: threonine 12, threonine 13, and serine 14. Position 12 (threonine 12) interacts with sn-glycerol 3-phosphate. Arginine 16 serves as a coordination point for ADP. Residues arginine 82, glutamate 83, tyrosine 134, and aspartate 245 each contribute to the sn-glycerol 3-phosphate site. Arginine 82, glutamate 83, tyrosine 134, aspartate 245, and glutamine 246 together coordinate glycerol. Residues threonine 267 and glycine 311 each coordinate ADP. Residues threonine 267, glycine 311, glutamine 315, and glycine 412 each contribute to the ATP site. The ADP site is built by glycine 412 and asparagine 416.

This sequence belongs to the FGGY kinase family.

It catalyses the reaction glycerol + ATP = sn-glycerol 3-phosphate + ADP + H(+). The protein operates within polyol metabolism; glycerol degradation via glycerol kinase pathway; sn-glycerol 3-phosphate from glycerol: step 1/1. Inhibited by fructose 1,6-bisphosphate (FBP). In terms of biological role, key enzyme in the regulation of glycerol uptake and metabolism. Catalyzes the phosphorylation of glycerol to yield sn-glycerol 3-phosphate. The sequence is that of Glycerol kinase from Acidiphilium cryptum (strain JF-5).